The chain runs to 448 residues: Cytoplasmic tRNA 2-thiolation protein 2 (448 aa).

Belongs to the CTU2/NCS2 family.

The protein localises to the cytoplasm. Its pathway is tRNA modification; 5-methoxycarbonylmethyl-2-thiouridine-tRNA biosynthesis. In terms of biological role, plays a central role in 2-thiolation of mcm(5)S(2)U at tRNA wobble positions of tRNA(Lys), tRNA(Glu) and tRNA(Gln). May act by forming a heterodimer with NCS6 that ligates sulfur from thiocarboxylated URM1 onto the uridine of tRNAs at wobble position. Prior mcm(5) tRNA modification by the elongator complex is required for 2-thiolation. May also be involved in protein urmylation. The chain is Cytoplasmic tRNA 2-thiolation protein 2 from Debaryomyces hansenii (strain ATCC 36239 / CBS 767 / BCRC 21394 / JCM 1990 / NBRC 0083 / IGC 2968) (Yeast).